Consider the following 392-residue polypeptide: Putative pectate lyase 21 (392 aa).

The signal sequence occupies residues 1–21; that stretch reads MSIVCTFFLFLLNTSFAFAFA. A glycan (N-linked (GlcNAc...) asparagine) is linked at N38. D189, D213, and D217 together coordinate Ca(2+). A glycan (N-linked (GlcNAc...) asparagine) is linked at N220. R269 is a catalytic residue.

The protein belongs to the polysaccharide lyase 1 family. Requires Ca(2+) as cofactor.

It catalyses the reaction Eliminative cleavage of (1-&gt;4)-alpha-D-galacturonan to give oligosaccharides with 4-deoxy-alpha-D-galact-4-enuronosyl groups at their non-reducing ends.. The protein operates within glycan metabolism; pectin degradation; 2-dehydro-3-deoxy-D-gluconate from pectin: step 2/5. This Arabidopsis thaliana (Mouse-ear cress) protein is Putative pectate lyase 21.